A 494-amino-acid polypeptide reads, in one-letter code: MKKQAFSSEQYLNLQRDHILERINQFDGKLYLEFGGKMLEDFHAARVLPGYEPDNKIKLLQELKEQVEVVIAINASNIEHSKARGDLGISYDQEVLRLIDKFNELGIFVGSVVITQYAGQPAADVFRNQLEKNGIDSYLHYPIKGYPTDMDHIISPEGMGKNDYIKTSRNLIVVTAPGPGSGKLATCMSNMYHDQINGIKSGYAKFETFPVWNLPLHHPVNLAYEAATADLDDVNMIDPFHLQTYGETTVNYNRDIEIFPVLKRMLERILGKSPYSSPTDMGVNMVGFAITDDEAAVEASKQEIIRRYYQTVLDFKAEKVGEAAVKKIELLMNDLSITPADRKVAVVARQKAEETGGPALAFELPNGEIVTGKNSELFGPTAAALINAIKKSADIAKEVKLIEPEVVKPIQGLKIDHLGSRNPRLHSNEILIALAITATENPDAARAMEELGNLKGSEAHSTIILTDEDKNVLRKLGINVTFDPYYQYDRLYRK.

This sequence belongs to the UPF0371 family.

The protein is UPF0371 protein SPH_0451 of Streptococcus pneumoniae (strain Hungary19A-6).